The primary structure comprises 904 residues: Dynamin-like protein C (904 aa).

The stretch at 44–102 (IAEAMALKMHEEEKKKREEKKRKRDNEELLSKQVRTKLENERKKLDDSESINASTNQEL) forms a coiled coil. Residues 53–93 (HEEEKKKREEKKRKRDNEELLSKQVRTKLENERKKLDDSES) are disordered. The segment covering 67–90 (RDNEELLSKQVRTKLENERKKLDD) has biased composition (basic and acidic residues). In terms of domain architecture, Dynamin-type G spans 119-441 (SFDTPELVVV…HEKYQQNLLP (323 aa)). The G1 motif stretch occupies residues 129–136 (GMQSDGKS). 129-136 (GMQSDGKS) is a binding site for GTP. A G2 motif region spans residues 155-157 (GTR). The segment at 169–227 (SKQQPSCRFKKEDYSNSYGGSSSSTSTTSGNSNHNTDKQQNVSSSQGGGGGSNNLNEDK) is disordered. The span at 183–213 (SNSYGGSSSSTSTTSGNSNHNTDKQQNVSSS) shows a compositional bias: low complexity. Residues 278–281 (DTPG) form a G3 motif region. GTP contacts are provided by residues 278-282 (DTPGF) and 343-346 (TKFD). The G4 motif stretch occupies residues 343–346 (TKFD). The segment at 378-381 (LPLK) is G5 motif. Residues 781–811 (EMFQLGLKELENKLHKLEFQLIDCKKNRDKF) are a coiled coil. 2 disordered regions span residues 821-840 (SLNQ…ASSS) and 853-904 (NGKF…FDQN). Positions 853–876 (NGKFSTPDKNSLTMSPFTSPFTQS) are enriched in polar residues. Residues 877–891 (NYHQHNNNNYQINQQ) show a composition bias toward low complexity.

It belongs to the TRAFAC class dynamin-like GTPase superfamily. Dynamin/Fzo/YdjA family.

It is found in the cytoplasm. The catalysed reaction is GTP + H2O = GDP + phosphate + H(+). Its function is as follows. Involved in cytokinesis. May hydrolyze GTP. This Dictyostelium discoideum (Social amoeba) protein is Dynamin-like protein C (dlpC).